Consider the following 384-residue polypeptide: Glucans biosynthesis protein C (384 aa).

10 helical membrane-spanning segments follow: residues 17-37, 54-74, 91-111, 140-160, 173-193, 212-232, 240-260, 274-294, 311-331, and 338-358; these read AWLMLLGIPFHISLIYSTHSW, FIHAFRMQVFFVISGYFSYML, VGIPMLTAIPLLTLPQFILLQ, LWFLLVLVILTTVSIGIFTWF, AISLARLSLIFFLLGMAYAAI, FIVMQTLFYVPFFILGALAFI, FTTPSRGCTLGAAVAFIAYLL, TESVITMVMGLWMVNVVFSLG, ASLFIYLVHHPLTLFFGAYIT, and LIGFLCGLIFVMGIALILYEI.

This sequence belongs to the acyltransferase 3 family. OpgC subfamily.

It localises to the cell membrane. Its pathway is glycan metabolism; osmoregulated periplasmic glucan (OPG) biosynthesis. In terms of biological role, necessary for the succinyl substitution of periplasmic glucans. Could catalyze the transfer of succinyl residues from the cytoplasmic side of the membrane to the nascent glucan backbones on the periplasmic side of the membrane. This Salmonella agona (strain SL483) protein is Glucans biosynthesis protein C.